The primary structure comprises 199 residues: MTKILVLYYSMYGHIEALASAVAEGAKKVADVEVTIKRVPETIPPEAFTKAGGKVDQSAPVASVQELVDYDAIIIGTPTRFGNMAGQMRNFLDQTGGLWAEGKLYGKVASVFTSTGVGGGQEMTITSTWTTLAHHGFIIVPIGYGIPEIGDISQMQGGTPYGASTIADGDGSRIPNENELKIARYQGEHVAKIAKKLKD.

Residues 4–190 (ILVLYYSMYG…KIARYQGEHV (187 aa)) enclose the Flavodoxin-like domain. FMN-binding positions include 10–15 (SMYGHI) and 79–81 (TRF). Tyr-12 serves as a coordination point for NAD(+). Trp-99 provides a ligand contact to substrate. His-134 is a binding site for FMN.

It belongs to the WrbA family. FMN serves as cofactor.

It catalyses the reaction a quinone + NADH + H(+) = a quinol + NAD(+). The enzyme catalyses a quinone + NADPH + H(+) = a quinol + NADP(+). This chain is NAD(P)H dehydrogenase (quinone), found in Photorhabdus laumondii subsp. laumondii (strain DSM 15139 / CIP 105565 / TT01) (Photorhabdus luminescens subsp. laumondii).